Here is a 143-residue protein sequence, read N- to C-terminus: Sporulation-specific protein 73 (143 aa).

It belongs to the SPO73 family. As to quaternary structure, interacts with SPO71.

Its subcellular location is the cytoplasm. It localises to the prospore membrane. Required for spore wall assembly and ascus formation. Involved in the formation and elongation of prospore membranes. The sequence is that of Sporulation-specific protein 73 from Saccharomyces cerevisiae (strain ATCC 204508 / S288c) (Baker's yeast).